A 691-amino-acid chain; its full sequence is Tumor necrosis factor alpha-induced protein 2 (691 aa).

The tract at residues Q9–L111 is disordered. The segment covering P12–R31 has biased composition (polar residues). A compositionally biased stretch (low complexity) spans T33–A45. Residues Q91–L107 are compositionally biased toward basic and acidic residues.

Belongs to the SEC6 family.

In terms of biological role, may play a role as a mediator of inflammation and angiogenesis. This is Tumor necrosis factor alpha-induced protein 2 (Tnfaip2) from Mus musculus (Mouse).